An 802-amino-acid polypeptide reads, in one-letter code: LPS-assembly protein LptD (802 aa).

The N-terminal stretch at 1–29 is a signal peptide; that stretch reads MARLFSLKPLVLALGFCFGTHCAAADAVA.

Belongs to the LptD family. In terms of assembly, component of the lipopolysaccharide transport and assembly complex. Interacts with LptE and LptA.

It is found in the cell outer membrane. Its function is as follows. Together with LptE, is involved in the assembly of lipopolysaccharide (LPS) at the surface of the outer membrane. The protein is LPS-assembly protein LptD of Neisseria meningitidis serogroup A / serotype 4A (strain DSM 15465 / Z2491).